The chain runs to 328 residues: Type II secretion system protein K (328 aa).

A propeptide spans 1–7 (MRSRQRG) (leader sequence). The chain crosses the membrane as a helical span at residues 8 to 28 (AALLVVLLILALMVTIAAVIT). The Periplasmic portion of the chain corresponds to 29-328 (ERTGKAFLRT…QYGGYRTVNP (300 aa)).

Belongs to the GSP K family. Type II secretion is composed of four main components: the outer membrane complex, the inner membrane complex, the cytoplasmic secretion ATPase and the periplasm-spanning pseudopilus. Interacts with core component OutG. Cleaved by prepilin peptidase.

The protein resides in the cell inner membrane. Component of the type II secretion system required for the energy-dependent secretion of extracellular factors such as proteases and toxins from the periplasm. Plays a role in pseudopilus assembly and seems to control its length. Interacts with the pseudopilus tip complex that is critical for the recognition and binding of secretion substrates. The polypeptide is Type II secretion system protein K (outK) (Pectobacterium carotovorum subsp. carotovorum (Erwinia carotovora subsp. carotovora)).